A 279-amino-acid chain; its full sequence is Ribosomal RNA small subunit methyltransferase A (279 aa).

The S-adenosyl-L-methionine site is built by H10, L12, G37, E58, D83, and N108.

The protein belongs to the class I-like SAM-binding methyltransferase superfamily. rRNA adenine N(6)-methyltransferase family. RsmA subfamily.

The protein localises to the cytoplasm. It carries out the reaction adenosine(1518)/adenosine(1519) in 16S rRNA + 4 S-adenosyl-L-methionine = N(6)-dimethyladenosine(1518)/N(6)-dimethyladenosine(1519) in 16S rRNA + 4 S-adenosyl-L-homocysteine + 4 H(+). Functionally, specifically dimethylates two adjacent adenosines (A1518 and A1519) in the loop of a conserved hairpin near the 3'-end of 16S rRNA in the 30S particle. May play a critical role in biogenesis of 30S subunits. This chain is Ribosomal RNA small subunit methyltransferase A, found in Synechococcus elongatus (strain ATCC 33912 / PCC 7942 / FACHB-805) (Anacystis nidulans R2).